A 396-amino-acid polypeptide reads, in one-letter code: Arginine biosynthesis bifunctional protein ArgJ (396 aa).

Residues Thr150, Lys177, Thr188, Glu267, Asn391, and Thr396 each coordinate substrate. Thr188 (nucleophile) is an active-site residue.

Belongs to the ArgJ family. As to quaternary structure, heterotetramer of two alpha and two beta chains.

The protein localises to the cytoplasm. The enzyme catalyses N(2)-acetyl-L-ornithine + L-glutamate = N-acetyl-L-glutamate + L-ornithine. It carries out the reaction L-glutamate + acetyl-CoA = N-acetyl-L-glutamate + CoA + H(+). It functions in the pathway amino-acid biosynthesis; L-arginine biosynthesis; L-ornithine and N-acetyl-L-glutamate from L-glutamate and N(2)-acetyl-L-ornithine (cyclic): step 1/1. The protein operates within amino-acid biosynthesis; L-arginine biosynthesis; N(2)-acetyl-L-ornithine from L-glutamate: step 1/4. Its function is as follows. Catalyzes two activities which are involved in the cyclic version of arginine biosynthesis: the synthesis of N-acetylglutamate from glutamate and acetyl-CoA as the acetyl donor, and of ornithine by transacetylation between N(2)-acetylornithine and glutamate. In Wolinella succinogenes (strain ATCC 29543 / DSM 1740 / CCUG 13145 / JCM 31913 / LMG 7466 / NCTC 11488 / FDC 602W) (Vibrio succinogenes), this protein is Arginine biosynthesis bifunctional protein ArgJ.